Here is a 493-residue protein sequence, read N- to C-terminus: Angiopoietin-related protein 2 (493 aa).

An N-terminal signal peptide occupies residues 1–22 (MRPLCVTCWWLGLLAAMGAVAG). 2 coiled-coil regions span residues 76 to 115 (PEVL…VDGG) and 152 to 206 (ALEL…HCQR). N-linked (GlcNAc...) asparagine glycosylation is found at N164 and N192. A Fibrinogen C-terminal domain is found at 269–489 (DKPSGPWRDC…KVVMMIRPNP (221 aa)). Disulfide bonds link C278/C307 and C430/C443.

Post-translationally, N-glycosylated. In terms of tissue distribution, widely expressed in heart, small intestine, spleen and stomach. Also found in lower levels in colon, ovary, adrenal gland, skeletal muscle and in prostate.

Its subcellular location is the secreted. Functionally, induces sprouting in endothelial cells through an autocrine and paracrine action. This chain is Angiopoietin-related protein 2 (ANGPTL2), found in Homo sapiens (Human).